The primary structure comprises 354 residues: Rhodopsin (354 aa).

At 1 to 36 the chain is on the extracellular side; sequence MNGTEGENFYIPMSNKTGVVRSPFDYPQYYLAEPWK. Asn2 and Asn15 each carry an N-linked (GlcNAc...) asparagine glycan. The helical transmembrane segment at 37-61 threads the bilayer; the sequence is FSVLAAYMFFLIIAGFPVNFLTLYV. At 62–73 the chain is on the cytoplasmic side; it reads TIQHKKLRQPLN. The helical transmembrane segment at 74–96 threads the bilayer; that stretch reads YILLNLAVADLFMIFGGFPSTMI. Residues 97 to 110 are Extracellular-facing; sequence TSMNGYFVFGPSGC. An intrachain disulfide couples Cys110 to Cys187. The chain crosses the membrane as a helical span at residues 111–133; it reads NFEGFFATLGGEIGLWSLVVLAI. Residues 134-136 carry the 'Ionic lock' involved in activated form stabilization motif; the sequence is ERY. At 134-152 the chain is on the cytoplasmic side; it reads ERYVVVCKPMSNFRFGSQH. A helical transmembrane segment spans residues 153-173; that stretch reads AFMGVGLTWIMAMACAFPPLV. The Extracellular portion of the chain corresponds to 174–202; it reads GWSRYIPEGMQCSCGIDYYTLKPEVNNES. N-linked (GlcNAc...) asparagine glycosylation is present at Asn200. The chain crosses the membrane as a helical span at residues 203 to 224; the sequence is FVIYMFVVHFSIPLTIIFFCYG. The Cytoplasmic segment spans residues 225 to 252; sequence RLVCTVKEAAAQQQESETTQRAEREVTR. Residues 253–274 form a helical membrane-spanning segment; that stretch reads MVIIMVIAFLICWLPYASVAFF. Residues 275-286 are Extracellular-facing; that stretch reads IFCNQGSEFGPI. Residues 287 to 308 form a helical membrane-spanning segment; the sequence is FMTIPAFFAKAASLYNPLIYIL. The residue at position 296 (Lys296) is an N6-(retinylidene)lysine. Residues 309–354 lie on the Cytoplasmic side of the membrane; it reads MNKQFRNCMITTICCGKNPFEEEESTSASASKTEASSVSSSQVAPA. S-palmitoyl cysteine attachment occurs at residues Cys322 and Cys323. The tract at residues 333–354 is disordered; it reads STSASASKTEASSVSSSQVAPA. Over residues 334–354 the composition is skewed to low complexity; that stretch reads TSASASKTEASSVSSSQVAPA.

Belongs to the G-protein coupled receptor 1 family. Opsin subfamily. In terms of processing, phosphorylated on some or all of the serine and threonine residues present in the C-terminal region. Post-translationally, contains one covalently linked retinal chromophore.

The protein resides in the membrane. Its subcellular location is the cell projection. The protein localises to the cilium. It is found in the photoreceptor outer segment. Functionally, photoreceptor required for image-forming vision at low light intensity. While most salt water fish species use retinal as chromophore, most freshwater fish use 3-dehydroretinal, or a mixture of retinal and 3-dehydroretinal. Light-induced isomerization of 11-cis to all-trans retinal triggers a conformational change that activates signaling via G-proteins. Subsequent receptor phosphorylation mediates displacement of the bound G-protein alpha subunit by arrestin and terminates signaling. This Scyliorhinus canicula (Small-spotted catshark) protein is Rhodopsin (rho).